Consider the following 202-residue polypeptide: N-(5'-phosphoribosyl)anthranilate isomerase (202 aa).

This sequence belongs to the TrpF family.

It carries out the reaction N-(5-phospho-beta-D-ribosyl)anthranilate = 1-(2-carboxyphenylamino)-1-deoxy-D-ribulose 5-phosphate. The protein operates within amino-acid biosynthesis; L-tryptophan biosynthesis; L-tryptophan from chorismate: step 3/5. This chain is N-(5'-phosphoribosyl)anthranilate isomerase, found in Bacillus cereus (strain ATCC 14579 / DSM 31 / CCUG 7414 / JCM 2152 / NBRC 15305 / NCIMB 9373 / NCTC 2599 / NRRL B-3711).